Consider the following 246-residue polypeptide: Ubiquitin-conjugating enzyme E2 6 (246 aa).

Topologically, residues 1-224 (MATKQAQKRL…LEKQHNDKPN (224 aa)) are cytoplasmic. The 150-residue stretch at 5-154 (QAQKRLTKEY…FNSTRFKLVF (150 aa)) folds into the UBC core domain. The active-site Glycyl thioester intermediate is the Cys-87. Residues 225 to 245 (GSSSMFYIGVALFLFLVGLFM) form a helical membrane-spanning segment.

Belongs to the ubiquitin-conjugating enzyme family.

It localises to the endoplasmic reticulum membrane. It carries out the reaction S-ubiquitinyl-[E1 ubiquitin-activating enzyme]-L-cysteine + [E2 ubiquitin-conjugating enzyme]-L-cysteine = [E1 ubiquitin-activating enzyme]-L-cysteine + S-ubiquitinyl-[E2 ubiquitin-conjugating enzyme]-L-cysteine.. It participates in protein modification; protein ubiquitination. In terms of biological role, catalyzes the covalent attachment of ubiquitin to other proteins. Functions in degradation of misfolded or regulated proteins localized in the endoplasmic reticulum (ER) lumen or membrane via the ubiquitin-proteasome system. Cognate E2 conjugating enzyme for the DOA10 ubiquitin ligase complex, which is part of the ERAD-C pathway responsible for the rapid degradation of membrane proteins with misfolded cytoplasmic domains. In Candida glabrata (strain ATCC 2001 / BCRC 20586 / JCM 3761 / NBRC 0622 / NRRL Y-65 / CBS 138) (Yeast), this protein is Ubiquitin-conjugating enzyme E2 6 (UBC6).